Reading from the N-terminus, the 414-residue chain is Snake venom metalloproteinase atrolysin-B (414 aa).

A signal peptide spans 1-20; the sequence is MIEVLLVTICLAVFPYQGSS. Positions 21 to 190 are excised as a propeptide; the sequence is IILESGNVND…KASDLNLNPD (170 aa). Gln-191 bears the Pyrrolidone carboxylic acid mark. One can recognise a Peptidase M12B domain in the interval 197–393; sequence RYIELVVVAD…YKPQCILNKP (197 aa). 2 residues coordinate Ca(2+): Glu-200 and Asp-284. Disulfide bonds link Cys-308-Cys-388 and Cys-348-Cys-355. His-333 serves as a coordination point for Zn(2+). Residue Glu-334 is part of the active site. His-337 and His-343 together coordinate Zn(2+). Ca(2+)-binding residues include Cys-388, Asn-391, Val-403, Asn-406, Leu-408, Glu-410, and Glu-413. The propeptide occupies 394–414; it reads LRIDPVSTPVSGNELLEAGEE.

The protein belongs to the venom metalloproteinase (M12B) family. P-I subfamily. As to quaternary structure, monomer. Zn(2+) is required as a cofactor. In terms of processing, the N-terminus is blocked. In terms of tissue distribution, expressed by the venom gland.

Its subcellular location is the secreted. The enzyme catalyses Cleavage of 5-His-|-Leu-6, 10-His-|-Leu-11, 14-Ala-|-Leu-15, 16-Tyr-|-Leu-17 and 23-Gly-|-Phe-24 of insulin B chain. Identical to the cleavage of insulin B chain by atrolysin C. Also cleaves Xaa-|-Ser bonds in glucagon.. Functionally, snake venom metalloproteinase that impairs hemostasis in the envenomed animal. The sequence is that of Snake venom metalloproteinase atrolysin-B from Crotalus atrox (Western diamondback rattlesnake).